Reading from the N-terminus, the 558-residue chain is Arginine--tRNA ligase (558 aa).

The short motif at 119–129 (PNIAKPMSMGH) is the 'HIGH' region element.

It belongs to the class-I aminoacyl-tRNA synthetase family. As to quaternary structure, monomer.

It localises to the cytoplasm. The catalysed reaction is tRNA(Arg) + L-arginine + ATP = L-arginyl-tRNA(Arg) + AMP + diphosphate. This Lactobacillus johnsonii (strain CNCM I-12250 / La1 / NCC 533) protein is Arginine--tRNA ligase.